The following is a 152-amino-acid chain: Transcriptional regulator MraZ (152 aa).

SpoVT-AbrB domains are found at residues 5-52 (ASAI…PIHE) and 81-124 (AHEV…DEQA).

This sequence belongs to the MraZ family. In terms of assembly, forms oligomers.

The protein resides in the cytoplasm. The protein localises to the nucleoid. The polypeptide is Transcriptional regulator MraZ (Shewanella putrefaciens (strain CN-32 / ATCC BAA-453)).